We begin with the raw amino-acid sequence, 312 residues long: Putative HTH-type transcriptional regulatory protein TV0294 (312 aa).

The region spanning 133-186 is the HTH cro/C1-type domain; sequence LRERRNELNLSIGNISSYLGVSRRSVSLYENGSAATIDIFIRLRNILKADIVDH. Residues 144 to 163 constitute a DNA-binding region (H-T-H motif); that stretch reads IGNISSYLGVSRRSVSLYEN.

This chain is Putative HTH-type transcriptional regulatory protein TV0294, found in Thermoplasma volcanium (strain ATCC 51530 / DSM 4299 / JCM 9571 / NBRC 15438 / GSS1).